The following is a 1139-amino-acid chain: Ras GTPase-activating protein nGAP (1139 aa).

Residues 1–87 are disordered; that stretch reads MQTPEVPAER…SRGLPKLKES (87 aa). Ser16 is subject to Phosphoserine. Over residues 17–36 the composition is skewed to polar residues; sequence ISGTSTSEKPNSMDTANTSP. In terms of domain architecture, PH spans 41–158; it reads GFFSKRLKGS…WMENLRRTVQ (118 aa). Residues 45–56 are compositionally biased toward basic residues; it reads KRLKGSIKRTKS. Positions 73-87 are enriched in basic and acidic residues; sequence STDDRSRGLPKLKES. Position 89 is a phosphoserine (Ser89). The C2 domain occupies 149 to 267; sequence WMENLRRTVQ…TGRQFVEKWY (119 aa). The Ras-GAP domain occupies 343–551; it reads GRAKDFLTDL…GGMKRFLLEI (209 aa). Phosphothreonine is present on Thr620. Ser663 is subject to Phosphoserine. Disordered regions lie at residues 684–704, 751–782, 803–869, 910–953, and 1116–1139; these read ASSQSMTYSEKDERESSLPNG, ETQSTPQSAPQVRRPLHPALNQPGGLQPLSFQ, SLEN…GQAQ, EPVQ…SATM, and NGISPTNPTKLSITENGEFKNSSC. Polar residues-rich tracts occupy residues 751 to 760 and 803 to 818; these read ETQSTPQSAP and SLENLSTASSRSQSNS. The span at 833-855 shows a compositional bias: basic and acidic residues; that stretch reads DFTKRSTQSEDFSRRHTVPDRHI. Position 864 is a phosphoserine (Ser864). The segment covering 916–928 has biased composition (low complexity); that stretch reads SRSRQQSSSSRES.

As to quaternary structure, interacts with PEAK1.

Inhibitory regulator of the Ras-cyclic AMP pathway. The chain is Ras GTPase-activating protein nGAP (RASAL2) from Homo sapiens (Human).